A 944-amino-acid chain; its full sequence is Trehalose monomycolate exporter MmpL3 (944 aa).

At 1–13 the chain is on the cytoplasmic side; sequence MFAWWGRTVYRYR. A helical membrane pass occupies residues 14–34; it reads FIVIGVMVALCLGGGVFGLSL. Topologically, residues 35-185 are periplasmic; that stretch reads GKHVTQSGFY…TIATDQRRME (151 aa). An a 1,2-diacylglycero-3-phosphoethanolamine-binding site is contributed by 40-44; sequence QSGFY. A helical membrane pass occupies residues 186–206; sequence VLALPLVAVVLFFVFGGVIAA. Over 207–209 the chain is Cytoplasmic; that stretch reads GLP. Residues 210 to 230 form a helical membrane-spanning segment; that stretch reads VMVGGLCIAGALGIMRFLAIF. Residues 231-235 lie on the Periplasmic side of the membrane; that stretch reads GPVHY. The helical transmembrane segment at 236-256 threads the bilayer; sequence FAQPVVSLIGLGIAIDYGLFI. The Cytoplasmic portion of the chain corresponds to 257–286; it reads VSRFREEIAEGYDTETAVRRTVITAGRTVT. The helical transmembrane segment at 287 to 307 threads the bilayer; it reads FSAVLIVASAIGLLLFPQGFL. The Periplasmic portion of the chain corresponds to 308-314; sequence KSLTYAT. Residues 315 to 335 form a helical membrane-spanning segment; it reads IASVMLSAILSITVLPACLGI. Residues 336-396 are Cytoplasmic-facing; sequence LGKHVDALGV…KLVNRVMKRP (61 aa). The chain crosses the membrane as a helical span at residues 397-417; sequence VLFAAPIVIIMILLIIPVGKL. Over 418 to 562 the chain is Periplasmic; that stretch reads SLGGISEKYL…HGLFAKMPLM (145 aa). Residues 563–583 form a helical membrane-spanning segment; sequence VVILLTTTIVLMFLAFGSVVL. The Cytoplasmic portion of the chain corresponds to 584–586; sequence PIK. Residues 587–607 form a helical membrane-spanning segment; that stretch reads ATLMSALTLGSTMGILTWIFV. At 608–616 the chain is on the periplasmic side; that stretch reads DGHFSKWLN. The chain crosses the membrane as a helical span at residues 617-637; that stretch reads FTPTPLTAPVIGLIIALVFGL. The Cytoplasmic segment spans residues 638 to 672; the sequence is STDYEVFLVSRMVEARERGMSTQEAIRIGTAATGR. Residues 673–693 form a helical membrane-spanning segment; sequence IITAAALIVAVVAGAFVFSDL. The Periplasmic segment spans residues 694–698; the sequence is VMMKY. A helical transmembrane segment spans residues 699–719; the sequence is LAFGLMAALLLDATVVRMFLV. Residues 720–944 are Cytoplasmic-facing; it reads PSVMKLLGDD…QDLLRREGRL (225 aa). A disordered region spans residues 778-944; it reads AAGDPRPPHD…QDLLRREGRL (167 aa). Low complexity predominate over residues 791-828; the sequence is PLAESPRPARSSPASSPELTPALEATAAPAAPSGASTT. The span at 829-839 shows a compositional bias: polar residues; sequence RMQIGSSTEPP. Over residues 855 to 866 the composition is skewed to pro residues; that stretch reads STPPPTPTPPSA.

Belongs to the resistance-nodulation-cell division (RND) (TC 2.A.6) family. MmpL subfamily. Monomer. Interacts with TtfA (via N-terminus); active trehalose monomycolate (TMM) biosynthesis is not required for the complex formation.

The protein resides in the cell inner membrane. It is found in the cell septum. It localises to the cell tip. Inhibited by the antitubercular drug SQ109. Also inhibited by several other compounds such as the pyrrole derivative BM212, the adamantyl urea derivative AU1235, the benzimidazole C215, indoleamides, tetrahydropyrazolo[1,5-a]pyrimidine-3-carboxamide (THPP) and N-benzyl-6',7'-dihydrospiro[piperidine-4,4'-thieno[3,2-c]pyran] (Spiro) analogs. Inhibitory effects of these compounds, including SQ109, are most likely due to their ability to dissipate the transmembrane electrochemical proton gradient. Its function is as follows. Transports trehalose monomycolate (TMM) to the cell wall. Flips TMM across the inner membrane. Membrane potential is not required for this function. Transports probably phosphatidylethanolamine (PE) as well. Binds specifically both TMM and PE, but not trehalose dimycolate (TDM). Also binds diacylglycerol (DAG) and other phospholipids, including phosphatidylglycerol (PG), phosphatidylinositol (PI), and cardiolipin (CDL). Contributes to membrane potential, cell wall composition, antibiotic susceptibility and fitness. Could also be part of a heme-iron acquisition system. Is the target of the antitubercular drug SQ109. This is Trehalose monomycolate exporter MmpL3 (mmpL3) from Mycobacterium tuberculosis (strain ATCC 25618 / H37Rv).